A 186-amino-acid chain; its full sequence is Elongation factor P (186 aa).

The protein belongs to the elongation factor P family.

It is found in the cytoplasm. It functions in the pathway protein biosynthesis; polypeptide chain elongation. Its function is as follows. Involved in peptide bond synthesis. Stimulates efficient translation and peptide-bond synthesis on native or reconstituted 70S ribosomes in vitro. Probably functions indirectly by altering the affinity of the ribosome for aminoacyl-tRNA, thus increasing their reactivity as acceptors for peptidyl transferase. This chain is Elongation factor P, found in Prochlorococcus marinus (strain MIT 9515).